The following is a 1063-amino-acid chain: Mediator of RNA polymerase II transcription subunit 15 (1063 aa).

The span at 149–175 shows a compositional bias: low complexity; it reads LQQSQIQQQRQQQQQQSQQPQQTQQPQ. Disordered regions lie at residues 149–194, 286–342, 422–482, 500–544, and 728–789; these read LQQS…SGSV, QQQQ…NATN, SQNA…QPIN, NKAR…AFTK, and TASI…SVGN. Polar residues-rich tracts occupy residues 176 to 192 and 301 to 310; these read ASSPTAPNTEANQQRSG and PQGNVGAQSL. Residues 311-342 are compositionally biased toward low complexity; it reads QSMSPQDQPSTQQQQPQRTAAPPNNPNVNATN. Residues 422–442 show a composition bias toward polar residues; that stretch reads SQNAPNTNKLGNPQPDNTGNP. Over residues 443–460 the composition is skewed to low complexity; the sequence is QAFSQQAFAQQQQQQQQQ. Polar residues-rich tracts occupy residues 461–482 and 500–527; these read LHRTSNPTSASVTSQNGQQPIN and NKARNATQPTQPPVSQVDYSNNLPPNLD. 2 stretches are compositionally biased toward low complexity: residues 528-542 and 733-758; these read TSSTFRSSASPPSAF and QQQQPQPQSQQQQQASQFPQAPSVSS. Residues 766 to 776 are compositionally biased toward polar residues; the sequence is SIPNAQPSVPG. Serine 948 carries the post-translational modification Phosphoserine.

It belongs to the Mediator complex subunit 15 family. In terms of assembly, component of the Mediator complex. Component of a med15-hrp1 subcomplex, which flexibly associates with the other Mediator components.

It localises to the nucleus. Its function is as follows. Component of the Mediator complex, a coactivator involved in the regulated transcription of nearly all RNA polymerase II-dependent genes. Mediator functions as a bridge to convey information from gene-specific regulatory proteins to the basal RNA polymerase II transcription machinery. Mediator is recruited to promoters by direct interactions with regulatory proteins and serves as a scaffold for the assembly of a functional preinitiation complex with RNA polymerase II and the general transcription factors. Component of a med15-hrp1 subcomplex, linking the Mediator complex to the chromatin-remodeling activity of hrp1 at a distinct subset of hrp1-bound gene promoters. The sequence is that of Mediator of RNA polymerase II transcription subunit 15 (med15) from Schizosaccharomyces pombe (strain 972 / ATCC 24843) (Fission yeast).